Reading from the N-terminus, the 285-residue chain is uncharacterized protein (285 aa).

Helical transmembrane passes span 7–29 (FYRLVKNTLLTAFILSLILLTLQ), 49–71 (LVVWNAYYTYFFIPEGVILSTFF), 95–117 (IFLYCSIPFLTFFLISALLSNTL), 137–156 (FFSEVPAGTFVSFGAVVLHA), 232–254 (KVVNYVNVATLPLFFFLSFTVAL), and 259–281 (GGLSYYAFASLFIVVHQLIIFVV).

Its subcellular location is the cell membrane. This is an uncharacterized protein from Aquifex aeolicus (strain VF5).